Reading from the N-terminus, the 114-residue chain is Tyrosine-protein phosphatase 11 (114 aa).

A Tyrosine-protein phosphatase domain is found at 1-114 (WRMIWEHNTR…EAKHTGPTIV (114 aa)). D81 is a binding site for substrate.

Belongs to the protein-tyrosine phosphatase family.

The catalysed reaction is O-phospho-L-tyrosyl-[protein] + H2O = L-tyrosyl-[protein] + phosphate. In Styela plicata (Wrinkled sea squirt), this protein is Tyrosine-protein phosphatase 11 (STY-11).